The sequence spans 902 residues: Potassium/sodium hyperpolarization-activated cyclic nucleotide-gated channel 1 (902 aa).

Residues 1–75 (MEGGGKPNSA…PAGSFEDAEG (75 aa)) are disordered. At 1–131 (MEGGGKPNSA…WIIHPYSDFR (131 aa)) the chain is on the cytoplasmic side. Residues 132–153 (FYWDLIMLIMMVGNLVIIPVGI) traverse the membrane as a helical segment. Topologically, residues 154-162 (TFFTEQTTT) are extracellular. Residues 163 to 183 (PWIIFNVASDTVFLLDLIMNF) traverse the membrane as a helical segment. Residues 184-204 (RTGTVNEDSSEIILDPKVIKM) lie on the Cytoplasmic side of the membrane. A helical membrane pass occupies residues 205–225 (NYLKSWFVVDFISSIPVDYIF). Over 226-249 (LIVEKGMDSEVYKTARALRIVRFT) the chain is Extracellular. Residues 250-270 (KILSLLRLLRLSRLIRYIHQW) form a helical; Voltage-sensor membrane-spanning segment. Residues 271–284 (EEIFHMTYDLASAV) lie on the Cytoplasmic side of the membrane. Residues 285–307 (VRIFNLIGMMLLLCHWDGCLQFL) form a helical membrane-spanning segment. The Extracellular segment spans residues 308–333 (VPLLQDFPPDCWVSLNEMVNDSWGKQ). A glycan (N-linked (GlcNAc...) asparagine) is linked at Asn-327. The segment at residues 334 to 355 (YSYALFKAMSHMLCIGYGAQAP) is an intramembrane region (pore-forming). The Selectivity filter motif lies at 347–351 (CIGYG). At 356-360 (VSMSD) the chain is on the extracellular side. The chain crosses the membrane as a helical span at residues 361 to 381 (LWITMLSMIVGATCYAMFVGH). The Cytoplasmic portion of the chain corresponds to 382–902 (ATALIQSLDS…AEKPRFASNL (521 aa)). The 3',5'-cyclic AMP site is built by Gly-528, Glu-529, Cys-531, Arg-538, Thr-539, Arg-579, and Arg-582. 3 disordered regions span residues 634–681 (TALN…QPSA), 713–824 (ASQL…VGES), and 858–902 (MSSG…ASNL). Low complexity-rich tracts occupy residues 639-680 (TSST…PQPS), 720-736 (QQPQPQLQQSQVQQTQP), and 744-769 (QPQQQQQQQQQQQQQQQQQQQQQQPQ). A compositionally biased stretch (polar residues) spans 770-793 (TPGSSTPKNEVHKSTQALHNTNLT). Residues 867 to 877 (RGVPPAPPPPA) are compositionally biased toward pro residues. The segment covering 889 to 902 (KDPDAEKPRFASNL) has biased composition (basic and acidic residues).

The protein belongs to the potassium channel HCN family. In terms of assembly, homotetramer. Heterotetramer with HCN2. The potassium channel is composed of a homo- or heterotetrameric complex of pore-forming subunits. Interacts with KCNE2. Interacts with the SH3 domain of CSK. As to expression, highly expressed in cerebral cortex, cerebellum, throughout the hippocampus, in medial habenula, anterior dorsal nucleus in the thalamus, tenia tecta, several nuclei of the general motor system and in optic nerve layer. Detected in a subset of elongated cells in taste buds.

Its subcellular location is the cell membrane. The enzyme catalyses Na(+)(in) = Na(+)(out). It carries out the reaction K(+)(in) = K(+)(out). With respect to regulation, activated by cAMP, and at 10-100 times higher concentrations, also by cGMP. cAMP binding promotes tetramerization and formation of an active channel. Compared to other family members, cAMP has less stimulatory effect on HCN1 because part of the molecules already contain bound cAMP and form homotetramers when cAMP levels are low, this inherent tetramerization in HCN1 results in a weaker response to increased cAMP. Hyperpolarization-activated ion channel that are permeable to sodium and potassium ions. Exhibits weak selectivity for potassium over sodium ions. Contributes to the native pacemaker currents in heart (If) and in neurons (Ih). Participates in cerebellar mechanisms of motor learning. May mediate responses to sour stimuli. This Rattus norvegicus (Rat) protein is Potassium/sodium hyperpolarization-activated cyclic nucleotide-gated channel 1 (Hcn1).